Consider the following 142-residue polypeptide: Large ribosomal subunit protein uL11 (142 aa).

It belongs to the universal ribosomal protein uL11 family. In terms of assembly, part of the ribosomal stalk of the 50S ribosomal subunit. Interacts with L10 and the large rRNA to form the base of the stalk. L10 forms an elongated spine to which L12 dimers bind in a sequential fashion forming a multimeric L10(L12)X complex. In terms of processing, one or more lysine residues are methylated.

Functionally, forms part of the ribosomal stalk which helps the ribosome interact with GTP-bound translation factors. This is Large ribosomal subunit protein uL11 from Shewanella sp. (strain W3-18-1).